The chain runs to 413 residues: Glutamyl-tRNA reductase (413 aa).

Substrate is bound by residues 49 to 52 (TCNR), S105, 110 to 112 (EPQ), and Q116. C50 (nucleophile) is an active-site residue. 185–190 (GAGETI) provides a ligand contact to NADP(+).

This sequence belongs to the glutamyl-tRNA reductase family. Homodimer.

The catalysed reaction is (S)-4-amino-5-oxopentanoate + tRNA(Glu) + NADP(+) = L-glutamyl-tRNA(Glu) + NADPH + H(+). The protein operates within porphyrin-containing compound metabolism; protoporphyrin-IX biosynthesis; 5-aminolevulinate from L-glutamyl-tRNA(Glu): step 1/2. Functionally, catalyzes the NADPH-dependent reduction of glutamyl-tRNA(Glu) to glutamate 1-semialdehyde (GSA). The chain is Glutamyl-tRNA reductase from Coxiella burnetii (strain Dugway 5J108-111).